The following is a 132-amino-acid chain: Small ribosomal subunit protein uS8 (132 aa).

This sequence belongs to the universal ribosomal protein uS8 family. As to quaternary structure, part of the 30S ribosomal subunit. Contacts proteins S5 and S12.

Its function is as follows. One of the primary rRNA binding proteins, it binds directly to 16S rRNA central domain where it helps coordinate assembly of the platform of the 30S subunit. This is Small ribosomal subunit protein uS8 from Streptococcus pneumoniae (strain Taiwan19F-14).